Reading from the N-terminus, the 265-residue chain is Lysosomal membrane ascorbate-dependent ferrireductase CYB561A3 (265 aa).

The Cytoplasmic portion of the chain corresponds to 1 to 2 (MA). Residues 3-23 (VGWFYLSVLALCSLGSMCILF) form a helical membrane-spanning segment. The 208-residue stretch at 12-219 (ALCSLGSMCI…FGLLVLYILL (208 aa)) folds into the Cytochrome b561 domain. Residues 24 to 45 (TIYWMRYWHGGFAWDGSMLMFN) are Lumenal-facing. Residues 46 to 66 (WHPVLMVTGMVVLYSAASLVY) traverse the membrane as a helical segment. Heme b contacts are provided by His47 and Arg67. The Cytoplasmic segment spans residues 67–83 (RLPQSWVGPRLPWKSGH). Residues Arg76 and Lys80 each contribute to the L-ascorbate site. His83 contributes to the heme b binding site. Residues 84-104 (AAMHLLAFLLTVLGLHAVFEF) form a helical membrane-spanning segment. Residues 105–119 (HNHAKIPHLYSLHSW) lie on the Lumenal side of the membrane. Heme b-binding positions include 112–115 (HLYS) and His117. Residues 120-140 (LGITTVFLFACQWFLGFSVFL) form a helical membrane-spanning segment. The Cytoplasmic portion of the chain corresponds to 141–154 (LPWASMWLRSLLKP). Position 149 (Arg149) interacts with L-ascorbate. A helical transmembrane segment spans residues 155–175 (IHVFFGASILSLAIASVVSGI). His156 and Glu177 together coordinate heme b. Residues 176-197 (NEKLFFSLKNGTKTYSNLPSEA) lie on the Lumenal side of the membrane. Asn185 carries N-linked (GlcNAc...) asparagine glycosylation. A helical membrane pass occupies residues 198–218 (VFANCAGMLVVVFGLLVLYIL). The Cytoplasmic segment spans residues 219–265 (LASSWKRPEPGMQAEREPTRTRGRAGTPEVMLEGERGLAEPLLQKRS). Lys224 contributes to the heme b binding site. Residues 228-238 (PGMQAEREPTR) show a composition bias toward basic and acidic residues. The interval 228-265 (PGMQAEREPTRTRGRAGTPEVMLEGERGLAEPLLQKRS) is disordered.

As to quaternary structure, homodimer. The cofactor is heme b. Post-translationally, N-glycosylated.

It localises to the late endosome membrane. It is found in the lysosome membrane. The enzyme catalyses Fe(3+)(out) + L-ascorbate(in) = monodehydro-L-ascorbate radical(in) + Fe(2+)(out) + H(+). Functionally, transmembrane reductase that uses ascorbate as an electron donor in the cytoplasm and transfers electrons across membranes to reduce iron cations Fe(3+) into Fe(2+) in the lumen of the late endosome and lysosome. Reduced iron can then be extruded from the late endosome and lysosome to the cytoplasm by divalent metal-specific transporters. It is therefore most probably involved in endosomal and lysosomal cellular iron homeostasis. In Bos taurus (Bovine), this protein is Lysosomal membrane ascorbate-dependent ferrireductase CYB561A3.